Reading from the N-terminus, the 447-residue chain is ATP-dependent protease ATPase subunit HslU (447 aa).

Residues Ile17, 59-64 (GVGKTE), Asp256, Glu321, and Arg393 each bind ATP.

Belongs to the ClpX chaperone family. HslU subfamily. A double ring-shaped homohexamer of HslV is capped on each side by a ring-shaped HslU homohexamer. The assembly of the HslU/HslV complex is dependent on binding of ATP.

It localises to the cytoplasm. Its function is as follows. ATPase subunit of a proteasome-like degradation complex; this subunit has chaperone activity. The binding of ATP and its subsequent hydrolysis by HslU are essential for unfolding of protein substrates subsequently hydrolyzed by HslV. HslU recognizes the N-terminal part of its protein substrates and unfolds these before they are guided to HslV for hydrolysis. This is ATP-dependent protease ATPase subunit HslU from Stutzerimonas stutzeri (strain A1501) (Pseudomonas stutzeri).